Here is a 18141-residue protein sequence, read N- to C-terminus: Titin (18141 aa).

Residues Met-1 to Ser-31 show a composition bias toward low complexity. The interval Met-1–Ala-69 is disordered. Basic and acidic residues predominate over residues Gln-32–Val-47. The span at Gln-48 to His-62 shows a compositional bias: low complexity. 17 Ig-like domains span residues Pro-86–Gln-177, Pro-255–Ala-343, Pro-372–Asn-461, Pro-471–Tyr-559, Pro-618–Ser-708, Pro-751–Arg-842, Pro-890–Thr-981, Pro-1024–Ile-1115, Pro-1158–Arg-1249, Pro-1291–Arg-1381, Pro-1424–Gln-1515, Pro-1558–Thr-1643, Pro-1691–Ile-1781, Pro-1824–Thr-1917, Pro-1958–Thr-2050, Pro-2089–Arg-2180, and Pro-2222–Arg-2313. Residues Glu-236 to Leu-266 form a disordered region. A disulfide bond links Cys-393 and Cys-445. Intrachain disulfides connect Cys-1312-Cys-1365, Cys-1446-Cys-1499, and Cys-1579-Cys-1632. Residues Cys-1846 and Cys-1899 are joined by a disulfide bond. An intrachain disulfide couples Cys-2111 to Cys-2164. Positions Ser-2338–Pro-2347 are enriched in basic and acidic residues. Residues Ser-2338–Val-2357 are disordered. Ig-like domains are found at residues Pro-2356–Val-2449, Pro-2488–Lys-2581, and Pro-2622–Glu-2715. A disordered region spans residues Pro-2731 to Thr-2750. Residues Gly-2734–Ala-2746 are compositionally biased toward basic and acidic residues. Ig-like domains lie at Pro-2754 to Lys-2844, Pro-2891 to Phe-2983, Pro-3029 to Ser-3116, Pro-3130 to Asn-3221, Pro-3263 to Lys-3354, Pro-3401 to Gln-3494, Pro-3539 to Ser-3625, Pro-3676 to Thr-3767, and Pro-3811 to Ser-3901. The cysteines at positions 2775 and 2828 are disulfide-linked. The cysteines at positions 3152 and 3205 are disulfide-linked. 3 disulfide bridges follow: Cys-3560–Cys-3613, Cys-3698–Cys-3751, and Cys-3832–Cys-3885. One copy of the TPR 1 repeat lies at Leu-3910–Asp-3944. 2 consecutive Ig-like domains span residues Pro-3954 to Ser-4047 and Pro-4092 to Val-4181. An intrachain disulfide couples Cys-3976 to Cys-4029. Positions Ala-4204–Gln-4229 form a coiled coil. 2 disordered regions span residues Leu-4226–Gln-4254 and Ser-4299–Ser-4336. The segment covering Tyr-4309–Val-4322 has biased composition (polar residues). Ig-like domains are found at residues Pro-4394–Val-4482, Pro-4497–Ile-4585, Pro-4604–Lys-4692, and Pro-4703–Thr-4791. The stretch at Cys-4403 to Pro-4438 is one TPR 2 repeat. Cysteines 4625 and 4676 form a disulfide. 8 disordered regions span residues Arg-4803–Val-4891, Asp-5318–Pro-5368, Arg-5413–Ala-5648, Ile-5667–Lys-5701, Lys-5718–Gln-5748, Lys-5775–Leu-5982, Lys-6034–Asp-6350, and Glu-6364–Val-6393. Low complexity predominate over residues Pro-4822 to Phe-4841. Basic residues predominate over residues Gly-4852 to Ser-4863. 5 stretches are compositionally biased toward basic and acidic residues: residues Gln-5344–Leu-5357, Arg-5436–Gln-5447, Gln-5541–Lys-5552, Ile-5591–Glu-5621, and Pro-5633–Glu-5645. One copy of the TPR 3 repeat lies at Pro-5575–Glu-5613. The segment covering Glu-5681–Glu-5697 has biased composition (acidic residues). Composition is skewed to acidic residues over residues Ile-5779–Glu-5792 and Asp-5818–Ile-5860. The span at Arg-5865–Lys-5874 shows a compositional bias: basic residues. A compositionally biased stretch (acidic residues) spans Glu-5883–Glu-5904. A compositionally biased stretch (basic residues) spans Arg-5910–Lys-5920. Over residues Val-5921–Ser-5971 the composition is skewed to basic and acidic residues. A compositionally biased stretch (basic residues) spans Lys-6034–Thr-6043. Over residues Glu-6049–Glu-6079 the composition is skewed to acidic residues. Composition is skewed to basic and acidic residues over residues Pro-6081–Thr-6092, Arg-6099–Leu-6133, Ile-6141–Arg-6169, Glu-6195–Glu-6209, Lys-6217–Trp-6234, and Pro-6259–Lys-6268. Residues Pro-6281–Leu-6290 show a composition bias toward acidic residues. Basic and acidic residues predominate over residues Glu-6291 to Ala-6306. Over residues Lys-6307 to Lys-6318 the composition is skewed to basic residues. 2 stretches are compositionally biased toward acidic residues: residues Glu-6325–Val-6349 and Glu-6364–Thr-6373. 7 consecutive Ig-like domains span residues Pro-6536–Ile-6624, Pro-6633–Ser-6728, Pro-6741–Ser-6830, Pro-6841–Asn-6929, Pro-6942–Gln-7034, Pro-7066–Thr-7151, and Pro-7189–Ser-7279. A disulfide bond links Cys-6557 and Cys-6608. An intrachain disulfide couples Cys-6964 to Cys-7016. A coiled-coil region spans residues Lys-7621 to Ala-7663. Disordered stretches follow at residues Ala-7773 to Gln-7793, Glu-9414 to Gln-9440, Glu-9485 to Ile-9510, Glu-9556 to Gln-9582, Glu-9627 to Ile-9652, Glu-9698 to Gln-9724, Glu-9769 to Glu-9796, Thr-9838 to Ile-9865, Glu-9911 to Gln-9937, Glu-9982 to Gln-10008, Glu-10053 to Glu-10080, Glu-10125 to Ile-10149, Glu-10195 to Ile-10220, Glu-10266 to Ile-10291, Glu-10337 to Glu-10364, Glu-10408 to Ile-10433, Glu-10479 to Ile-10504, Glu-10550 to Gln-10576, Glu-10621 to Glu-10648, Glu-10692 to Ile-10717, Glu-10763 to Ile-10788, Glu-10834 to Gln-10860, Glu-10905 to Glu-10932, Glu-11047 to Gln-11073, Glu-11118 to Ile-11143, Glu-11189 to Glu-11216, Glu-11260 to Gln-11286, Glu-11679 to Asp-11703, and Thr-11767 to Pro-11795. Residues Lys-7774 to Pro-7783 are compositionally biased toward basic and acidic residues. Composition is skewed to acidic residues over residues Val-9429 to Gln-9440, Val-9500 to Ile-9510, Val-9571 to Gln-9582, Val-9642 to Ile-9652, Val-9713 to Gln-9724, Val-9784 to Glu-9796, Val-9855 to Ile-9865, Val-9926 to Gln-9937, Val-9997 to Gln-10008, Val-10068 to Glu-10080, Val-10139 to Ile-10149, Val-10210 to Ile-10220, Val-10281 to Ile-10291, Val-10352 to Glu-10364, Val-10423 to Ile-10433, Val-10494 to Ile-10504, Val-10565 to Gln-10576, Val-10636 to Glu-10648, Val-10707 to Ile-10717, Val-10778 to Ile-10788, Val-10849 to Gln-10860, Val-10920 to Glu-10932, Val-11062 to Gln-11073, Val-11133 to Ile-11143, Val-11204 to Glu-11216, and Val-11275 to Gln-11286. A compositionally biased stretch (basic residues) spans Lys-11686 to Lys-11699. Positions Pro-11780–Leu-11792 are enriched in basic and acidic residues. One copy of the TPR 4 repeat lies at Lys-11872–Lys-11905. Disordered regions lie at residues Phe-12003–Lys-12201, Thr-12451–Glu-12471, Thr-12685–Pro-12767, Ile-12943–Ser-12971, Ile-13131–Pro-13154, Gln-13325–Lys-13349, Glu-13471–Asn-13492, Glu-13554–Lys-13576, Lys-13702–Asp-13792, Glu-13891–Lys-13914, Met-13951–Lys-13994, Thr-14073–Lys-14094, Glu-14109–Thr-14322, Glu-14354–Lys-14377, Pro-14414–Val-14448, Glu-14533–Lys-14566, Lys-14583–Pro-14720, and Val-14756–Lys-14789. 6 stretches are compositionally biased toward basic and acidic residues: residues Glu-12022 to His-12035, Glu-12044 to Lys-12054, Met-12124 to Ser-12134, Leu-12183 to Lys-12201, Thr-12457 to Glu-12471, and Thr-12685 to Glu-12709. A compositionally biased stretch (acidic residues) spans His-12731 to Ser-12741. Residues Lys-12750–Lys-12760 are compositionally biased toward basic residues. Basic and acidic residues predominate over residues Gly-13141 to Pro-13154. The segment covering Lys-13482–Asn-13492 has biased composition (basic residues). One copy of the TPR 5 repeat lies at Gln-13566 to Pro-13599. Residues Leu-13733–Glu-13747 are compositionally biased toward basic and acidic residues. The segment covering Pro-13771 to Ser-13781 has biased composition (basic residues). 2 stretches are compositionally biased toward basic and acidic residues: residues Val-13893–Ala-13906 and Glu-13975–Glu-13984. The segment covering Thr-14221–Val-14240 has biased composition (basic and acidic residues). Positions Lys-14264–Ser-14274 are enriched in low complexity. Over residues Val-14282–Pro-14294 the composition is skewed to basic and acidic residues. Over residues Ile-14542–Ala-14554 the composition is skewed to basic and acidic residues. Residues Pro-14555–Val-14564 are compositionally biased toward basic residues. Residues Lys-14583–Val-14599 are compositionally biased toward basic and acidic residues. The span at Glu-14652–Glu-14662 shows a compositional bias: low complexity. A compositionally biased stretch (polar residues) spans Thr-14664 to Ala-14683. Residues Gln-14684–Ile-14697 show a composition bias toward basic and acidic residues. The span at Val-14756–Pro-14771 shows a compositional bias: acidic residues. The stretch at Ile-14904 to Lys-14936 is one TPR 6 repeat. Disordered regions lie at residues Glu-14956–Lys-15208, Thr-15301–Asp-15329, Ile-15425–Lys-15448, Ile-15578–Val-15597, Glu-15697–Glu-15722, Glu-15825–Pro-15876, Glu-15951–Ile-15973, and Gln-16181–Gln-16206. Composition is skewed to basic and acidic residues over residues Glu-14967 to Leu-14989, Glu-15024 to Glu-15046, Gln-15069 to Lys-15080, Lys-15088 to Pro-15097, Pro-15109 to Leu-15139, Ile-15169 to Lys-15179, Gln-15189 to Glu-15198, Val-15316 to Gln-15325, Ile-15425 to Glu-15437, and Ile-15578 to Glu-15589. The span at Ile-15703–Glu-15716 shows a compositional bias: acidic residues. A compositionally biased stretch (basic and acidic residues) spans Glu-15951–Leu-15964. Residues Glu-16183 to Glu-16193 are compositionally biased toward acidic residues. Residues Glu-16409–Glu-16470 enclose the SH3 domain. Ig-like domains follow at residues Pro-16501 to Ile-16590, Pro-16625 to Lys-16719, Pro-16728 to Thr-16811, Pro-16822 to Asp-16916, Thr-16919 to Glu-17001, Pro-17007 to Val-17091, Pro-17097 to Thr-17180, Pro-17184 to Cys-17270, and Pro-17277 to Ser-17363. Cys-16940 and Cys-16989 are oxidised to a cystine. The 94-residue stretch at Ala-17374–Lys-17467 folds into the Fibronectin type-III 1 domain. Ig-like domains lie at Pro-17473 to Lys-17558 and Pro-17563 to Gln-17653. Residues Cys-17494 and Cys-17542 are joined by a disulfide bond. Fibronectin type-III domains are found at residues Arg-17660–Phe-17755, Pro-17760–Ser-17861, Pro-17862–Ser-17958, and Pro-17982–Ala-18078. A TPR 7 repeat occupies Leu-17694 to Tyr-17728. Positions Ser-17741–Asn-17771 are disordered.

The protein belongs to the protein kinase superfamily. CAMK Ser/Thr protein kinase family. In terms of assembly, interacts with Msp300; this interaction mediates the recruitment of Msp300 to the Z-disks. In terms of tissue distribution, expressed in the mesoderm at stage 11, several hours before myoblast fusion, and persists in most muscle cells, somatic, visceral and pharyngeal muscles and their precursors, until the third instar. Isoform A: Expressed in the indirect flight muscle (at protein level).

The protein localises to the cytoplasm. Its subcellular location is the nucleus. It is found in the chromosome. It localises to the myofibril. The protein resides in the sarcomere. The protein localises to the z line. Key component in the assembly and functioning of adult and embryonic striated muscles and muscle tendons. By providing connections at the level of individual microfilaments, it contributes to the fine balance of forces between the two halves of the sarcomere. The size and extensibility of the cross-links are the main determinants of sarcomere extensibility properties of muscle. In non-muscle cells, seems to play a role in chromosome condensation and chromosome segregation during mitosis. Might link the lamina network to chromatin or nuclear actin, or both during interphase. This Drosophila melanogaster (Fruit fly) protein is Titin (sls).